We begin with the raw amino-acid sequence, 261 residues long: Complex I assembly factor TIMMDC1, mitochondrial (261 aa).

A run of 3 helical transmembrane segments spans residues L67–V87, W131–V151, and A183–M203.

Belongs to the Tim17/Tim22/Tim23 family. As to quaternary structure, associates with complex I assembly intermediates during its biogenesis in a NdufAF3 and NdufAF4 dependent manner.

It localises to the membrane. In terms of biological role, chaperone protein involved in the assembly of the mitochondrial NADH:ubiquinone oxidoreductase complex (complex I). Essential for viability. This is Complex I assembly factor TIMMDC1, mitochondrial from Drosophila melanogaster (Fruit fly).